The chain runs to 1828 residues: AT-rich interactive domain-containing protein 2 (1828 aa).

Alanine 2 carries the N-acetylalanine modification. Serine 4 carries the phosphoserine modification. Residues lysine 7, lysine 15, and lysine 119 each participate in a glycyl lysine isopeptide (Lys-Gly) (interchain with G-Cter in SUMO2) cross-link. Positions arginine 13–histidine 105 constitute an ARID domain. The short motif at leucine 313–leucine 317 is the LXXLL element. The RFX-type winged-helix DNA-binding region spans alanine 524–alanine 603. A Glycyl lysine isopeptide (Lys-Gly) (interchain with G-Cter in SUMO2) cross-link involves residue lysine 555. 2 positions are modified to phosphoserine: serine 631 and serine 635. Threonine 653 is subject to Phosphothreonine. The residue at position 689 (serine 689) is a Phosphoserine. Position 692 is a phosphothreonine (threonine 692). Disordered regions lie at residues threonine 824–glutamine 843, leucine 962–valine 1028, lysine 1245–aspartate 1339, lysine 1360–valine 1462, histidine 1483–threonine 1503, and serine 1566–proline 1618. The span at alanine 987–arginine 1011 shows a compositional bias: polar residues. Positions glutamine 1012 to valine 1028 are enriched in low complexity. Basic and acidic residues predominate over residues lysine 1245–valine 1259. A compositionally biased stretch (polar residues) spans arginine 1267–glutamine 1283. Serine 1294 carries the post-translational modification Phosphoserine. 2 stretches are compositionally biased toward polar residues: residues aspartate 1295–proline 1320 and leucine 1366–valine 1379. Serine 1385 is subject to Phosphoserine. Polar residues-rich tracts occupy residues glutamine 1390–threonine 1400 and glycine 1419–glutamate 1428. A compositionally biased stretch (low complexity) spans serine 1453–valine 1462. A Phosphoserine modification is found at serine 1491. Composition is skewed to polar residues over residues serine 1491–threonine 1503 and alanine 1567–asparagine 1586. Low complexity predominate over residues alanine 1594–glutamine 1614. A C2H2-type zinc finger spans residues phenylalanine 1626–histidine 1651. Glycyl lysine isopeptide (Lys-Gly) (interchain with G-Cter in SUMO2) cross-links involve residues lysine 1695, lysine 1710, and lysine 1725. Residues aspartate 1697–alanine 1726 form a disordered region. Residues valine 1702–valine 1714 show a composition bias toward polar residues.

It belongs to the RFX family. In terms of assembly, component of the SWI/SNF-B (PBAF) chromatin remodeling complex, at least composed of SMARCA4/BRG1, SMARCB1/BAF47/SNF5, ACTL6A/BAF53A or ACTL6B/BAF53B, SMARCE1/BAF57, SMARCD1/BAF60A, SMARCD2/BAF60B, perhaps SMARCD3/BAF60C, SMARCC1/BAF155, SMARCC2/BAF170, PBRM1/BAF180, ARID2/BAF200 and actin. Interacts with SRF. Forms complexes with SRF and SRF cofactors MYOCD, NKX2-5 and SRFBP1. As to expression, highly expressed in testis, expressed in heart, liver and kidney.

The protein localises to the nucleus. In terms of biological role, involved in transcriptional activation and repression of select genes by chromatin remodeling (alteration of DNA-nucleosome topology). Required for the stability of the SWI/SNF chromatin remodeling complex SWI/SNF-B (PBAF). May be involved in targeting the complex to different genes. May be involved in regulating transcriptional activation of cardiac genes. The sequence is that of AT-rich interactive domain-containing protein 2 from Mus musculus (Mouse).